We begin with the raw amino-acid sequence, 602 residues long: Sulfite reductase [NADPH] flavoprotein alpha-component (602 aa).

Residues 68–206 form the Flavodoxin-like domain; that stretch reads ITIISASQTG…NYIQWSEELL (139 aa). FMN contacts are provided by residues 74–79, 121–124, and 157–166; these read SQTGNA, STQG, and LGDVSYNLFC. The FAD-binding FR-type domain occupies 237-451; it reads YKPAVATVLL…VEEKSNFRLP (215 aa). FAD contacts are provided by residues Thr-325, Lys-359, 389–392, 407–409, and 422–425; these read RLYS, TVG, and GGSS. NADP(+) contacts are provided by residues 522–523, 528–532, and Asp-564; these read SR and KIYVQ. Tyr-602 lines the FAD pocket.

Belongs to the NADPH-dependent sulphite reductase flavoprotein subunit CysJ family. This sequence in the N-terminal section; belongs to the flavodoxin family. The protein in the C-terminal section; belongs to the flavoprotein pyridine nucleotide cytochrome reductase family. As to quaternary structure, alpha(8)-beta(8). The alpha component is a flavoprotein, the beta component is a hemoprotein. FAD is required as a cofactor. It depends on FMN as a cofactor.

The catalysed reaction is hydrogen sulfide + 3 NADP(+) + 3 H2O = sulfite + 3 NADPH + 4 H(+). It participates in sulfur metabolism; hydrogen sulfide biosynthesis; hydrogen sulfide from sulfite (NADPH route): step 1/1. Its function is as follows. Component of the sulfite reductase complex that catalyzes the 6-electron reduction of sulfite to sulfide. This is one of several activities required for the biosynthesis of L-cysteine from sulfate. The flavoprotein component catalyzes the electron flow from NADPH -&gt; FAD -&gt; FMN to the hemoprotein component. This Buchnera aphidicola subsp. Schizaphis graminum (strain Sg) protein is Sulfite reductase [NADPH] flavoprotein alpha-component.